The following is a 578-amino-acid chain: Putative diflavin flavoprotein A 2 (578 aa).

A zinc metallo-hydrolase region spans residues 48-240; the sequence is RHGTTYNSFL…LQVVLVATGH (193 aa). Residues H97, E99, D101, H164, D183, and H240 each coordinate Fe cation. The 138-residue stretch at 269–406 folds into the Flavodoxin-like domain; it reads VALFYVDGYG…LCREAGTDLG (138 aa). Residues 429–578 form a flavodoxin-reductase-like region; the sequence is IGRLSTGLYI…THHRKLGNHY (150 aa).

In the N-terminal section; belongs to the zinc metallo-hydrolase group 3 family. It in the C-terminal section; belongs to the flavodoxin reductase family. It depends on Fe cation as a cofactor.

In terms of biological role, mediates electron transfer from NADH to oxygen, reducing it to water. This modular protein has 3 redox cofactors, in other organisms the same activity requires 2 or 3 proteins. This is Putative diflavin flavoprotein A 2 (dfa2) from Synechocystis sp. (strain ATCC 27184 / PCC 6803 / Kazusa).